A 77-amino-acid chain; its full sequence is Acyl carrier protein (77 aa).

One can recognise a Carrier domain in the interval 2 to 77; that stretch reads SDIADRVKKI…DAVKFIQGAV (76 aa). S37 is subject to O-(pantetheine 4'-phosphoryl)serine.

It belongs to the acyl carrier protein (ACP) family. In terms of processing, 4'-phosphopantetheine is transferred from CoA to a specific serine of apo-ACP by AcpS. This modification is essential for activity because fatty acids are bound in thioester linkage to the sulfhydryl of the prosthetic group.

The protein localises to the cytoplasm. Its pathway is lipid metabolism; fatty acid biosynthesis. Carrier of the growing fatty acid chain in fatty acid biosynthesis. The chain is Acyl carrier protein from Paracoccus denitrificans (strain Pd 1222).